The chain runs to 525 residues: MNTANFPWLTTIILLPIAASLLIPIIPDKDGKTIRWYALTVGLIDFALIVYAFYTSYDFANPDLQLVESYPWVPQLDLNWSVGADGLSMPLIILTGFITTLATLAAWPVTLKPRLFYFLLLAMYGGQIAVFAVQDMLLFFLVWELELIPVYLLLAIWGGKKRQYAATKFILYTAGGSLFILLASLTMAFYGDTVTFDMRSLALKDYALNFQLLLYAGFLIAYAIKLPIIPLHTWLPDAHGEATAPAHMLLAGILLKMGGYALIRMNAGILPDAHAYFAPVLVVLGVVNIIYAALTSFAQRNLKRKIAYSSISHMGFVIIGFASFTDLGLSGAVLQMVSHGLIGASLFFLVGATYDRTHTLMLDEMGGVGKRMPKIFAMFTACSMASLALPGMSGFVAELMVFVGFATSDAYSSTFKVIVVFLMAVGVILTPIYLLSMLREIFYGKENEELVSHQQLIDAEPREVFVIACLLVPIIGIGFYPKLLTQMYDATTVQLTARLRDSVPTLAQEKQEVARVSLSAPVIGN.

The next 14 membrane-spanning stretches (helical) occupy residues 6–26 (FPWLTTIILLPIAASLLIPII), 36–56 (WYALTVGLIDFALIVYAFYTS), 91–111 (LIILTGFITTLATLAAWPVTL), 115–135 (LFYFLLLAMYGGQIAVFAVQD), 137–157 (LLFFLVWELELIPVYLLLAIW), 169–189 (FILYTAGGSLFILLASLTMAF), 212–232 (LLLYAGFLIAYAIKLPIIPLH), 243–263 (TAPAHMLLAGILLKMGGYALI), 277–297 (FAPVLVVLGVVNIIYAALTSF), 314–334 (MGFVIIGFASFTDLGLSGAVL), 335–355 (QMVSHGLIGASLFFLVGATYD), 375–397 (IFAMFTACSMASLALPGMSGFVA), 417–437 (VIVVFLMAVGVILTPIYLLSM), and 464–484 (VFVIACLLVPIIGIGFYPKLL).

The protein belongs to the complex I subunit 4 family.

The protein localises to the cellular thylakoid membrane. It catalyses the reaction a plastoquinone + NADH + (n+1) H(+)(in) = a plastoquinol + NAD(+) + n H(+)(out). It carries out the reaction a plastoquinone + NADPH + (n+1) H(+)(in) = a plastoquinol + NADP(+) + n H(+)(out). Functionally, NDH-1 shuttles electrons from NAD(P)H, via FMN and iron-sulfur (Fe-S) centers, to quinones in the respiratory chain. The immediate electron acceptor for the enzyme in this species is believed to be plastoquinone. Couples the redox reaction to proton translocation (for every two electrons transferred, four hydrogen ions are translocated across the cytoplasmic membrane), and thus conserves the redox energy in a proton gradient. The sequence is that of NAD(P)H-quinone oxidoreductase chain 4-2 (ndhD2) from Nostoc sp. (strain PCC 7120 / SAG 25.82 / UTEX 2576).